Reading from the N-terminus, the 57-residue chain is Large ribosomal subunit protein bL33 (57 aa).

It belongs to the bacterial ribosomal protein bL33 family.

The chain is Large ribosomal subunit protein bL33 from Akkermansia muciniphila (strain ATCC BAA-835 / DSM 22959 / JCM 33894 / BCRC 81048 / CCUG 64013 / CIP 107961 / Muc).